The primary structure comprises 751 residues: MSMEKPPLASGLARTRSEQLYETVAADIRSPHGSMDANGVPATAPAAVGGGGTLSRKSSRRLMGMSPGRSSGAGTHIRKSRSAQLKLELEEVSSGAALSRASSASLGLSFSFTGFAMPPEEISDSKPFSDDEMIPEDIEAGKKKPKFQAEPTLPIFLKFRDVTYKVVIKKLTSSVEKEILTGISGSVNPGEVLALMGPSGSGKTTLLSLLAGRISQSSTGGSVTYNDKPYSKYLKSKIGFVTQDDVLFPHLTVKETLTYAARLRLPKTLTREQKKQRALDVIQELGLERCQDTMIGGAFVRGVSGGERKRVSIGNEIIINPSLLLLDEPTSGLDSTTALRTILMLHDIAEAGKTVITTIHQPSSRLFHRFDKLILLGRGSLLYFGKSSEALDYFSSIGCSPLIAMNPAEFLLDLANGNINDISVPSELDDRVQVGNSGRETQTGKPSPAAVHEYLVEAYETRVAEQEKKKLLDPVPLDEEAKAKSTRLKRQWGTCWWEQYCILFCRGLKERRHEYFSWLRVTQVLSTAVILGLLWWQSDIRTPMGLQDQAGLLFFIAVFWGFFPVFTAIFAFPQERAMLNKERAADMYRLSAYFLARTTSDLPLDFILPSLFLLVVYFMTGLRISPYPFFLSMLTVFLCIIAAQGLGLAIGAILMDLKKATTLASVTVMTFMLAGGFFVKKVPVFISWIRYLSFNYHTYKLLLKVQYQDFAVSINGMRIDNGLTEVAALVVMIFGYRLLAYLSLRQMKIVT.

A disordered region spans residues 26-81 (ADIRSPHGSMDANGVPATAPAAVGGGGTLSRKSSRRLMGMSPGRSSGAGTHIRKSR). Residues 157-403 (LKFRDVTYKV…FSSIGCSPLI (247 aa)) enclose the ABC transporter domain. Position 197-204 (197-204 (GPSGSGKT)) interacts with ATP. Residues 498–707 (EQYCILFCRG…TYKLLLKVQY (210 aa)) form the ABC transmembrane type-2 domain. Helical transmembrane passes span 516 to 536 (FSWL…LLWW), 552 to 572 (LLFF…IFAF), 602 to 622 (LPLD…MTGL), 634 to 654 (LTVF…GAIL), 666 to 686 (VTVM…PVFI), and 722 to 742 (GLTE…LAYL).

It belongs to the ABC transporter superfamily. ABCG family. Eye pigment precursor importer (TC 3.A.1.204) subfamily.

Its subcellular location is the membrane. The protein is ABC transporter G family member 22 (ABCG22) of Arabidopsis thaliana (Mouse-ear cress).